Here is a 757-residue protein sequence, read N- to C-terminus: 5-methyltetrahydropteroyltriglutamate--homocysteine methyltransferase (757 aa).

5-methyltetrahydropteroyltri-L-glutamate-binding positions include 17–20 and K115; that span reads RELK. Residues 430–432 and E483 contribute to the L-homocysteine site; that span reads IGS. Residues 430–432 and E483 each bind L-methionine; that span reads IGS. 5-methyltetrahydropteroyltri-L-glutamate contacts are provided by residues 514–515 and W560; that span reads RC. D598 serves as a coordination point for L-homocysteine. D598 serves as a coordination point for L-methionine. A 5-methyltetrahydropteroyltri-L-glutamate-binding site is contributed by E604. Zn(2+) contacts are provided by H640, C642, and E664. The active-site Proton donor is the H693. A Zn(2+)-binding site is contributed by C725.

This sequence belongs to the vitamin-B12 independent methionine synthase family. It depends on Zn(2+) as a cofactor.

It catalyses the reaction 5-methyltetrahydropteroyltri-L-glutamate + L-homocysteine = tetrahydropteroyltri-L-glutamate + L-methionine. It participates in amino-acid biosynthesis; L-methionine biosynthesis via de novo pathway; L-methionine from L-homocysteine (MetE route): step 1/1. Functionally, catalyzes the transfer of a methyl group from 5-methyltetrahydrofolate to homocysteine resulting in methionine formation. In Buchnera aphidicola subsp. Schizaphis graminum (strain Sg), this protein is 5-methyltetrahydropteroyltriglutamate--homocysteine methyltransferase.